Here is a 127-residue protein sequence, read N- to C-terminus: Large-conductance mechanosensitive channel (127 aa).

A run of 3 helical transmembrane segments spans residues 8–28, 30–50, and 70–90; these read FAFKGNVLDLAIGVIIGAAFG, IVTALVDVVIMPIISIILSLI, and IGVLIKTIIEFLIIAFVLFLF.

The protein belongs to the MscL family. In terms of assembly, homopentamer.

It localises to the cell membrane. Functionally, channel that opens in response to stretch forces in the membrane lipid bilayer. May participate in the regulation of osmotic pressure changes within the cell. This chain is Large-conductance mechanosensitive channel, found in Herpetosiphon aurantiacus (strain ATCC 23779 / DSM 785 / 114-95).